The sequence spans 985 residues: MRILSLLFLLLLGFLAGNRVVSATDHGKTTDVTWDRYSLSVKGERLFVFSGEFHYQRLPVPEMWLDVFQKLRANGFNAISVYFFWGYHSASEGEFDFETGAHNIQRLFDYAKEAGIYVIARAGPYCNAETTAGGYALWAANGQMGNERTSDDAYYAKWRPWILEVGKIIAANQITNGGPVILNQHENELQETSYEADNTLVVYMKQIARVFQEAGIVVPSSHNEKGMRAVSWSTDHHDVGGAVNIYGLDSYPGGLSCTNPSSGFNLVRTYYQWFQNSSYTQPEYLPEFEGGWFQPWGGHDYDTCATELSPEFADVYYKNNIGSRVTLQNIYMVFGGTNWGHSAAPVVYTSYDYSAPLRETREIRDKLKQTKLIGLFTRVSSDLLKTHMEGNGTGYTSDSSIYTWALHNPDTNAGFYVLAHKTSSSRSVTEFSLNVTTSAGAISIPDIQLDGRQSKIIVTDYQFGKSSALLYSSAEVLTYANLDVDVLVLYLNVGQKGLFVFKDERSKLSFQTYGNTNVTASVSSHGTQYIYTQAEGVTAVKFSNGVLAYLLDKESAWNFFAPPTTSNPQVAPDEHILVQGPYLVRGVTINHDTVEIIGDNANTTSLEVYAGNLRVKVVKWNGKAIKSRRTAYGSLVGRAPGAEDARISPPSLDSWSAQDTLPDIQPDYDDSRWTVCNKTASVNAVPLLSLPVLYSGDYGYHAGTKVYRGRFDGRNVTGANVTVQNGVASGWAAWLNGQFVGGVAGAIDLAVTSAVLSFNSSLLHDRDNVLTVVTDYTGHDQNSVRPKGTQNPRGILGATLIGGGKFTSWRIQGNAGGEKNIDPVRGPINEGGLYGERMGWHLPGYKAPRSAAKSSPLDGISGAEGRFYTTTFTLKLDRDLDVPIGLQLGAPAGTQAVVQVFMNGYQFGHYLPHIGPQSLFPFPPGVINNRGENTLAISMWALTDAGAKLDQVELVAYGKYRSGFDFNQDWGYLQPQWKDNRRQYA.

Positions 1–23 (MRILSLLFLLLLGFLAGNRVVSA) are cleaved as a signal peptide. Positions 82, 127, 128, 129, and 187 each coordinate substrate. E188 functions as the Proton donor in the catalytic mechanism. Y251 provides a ligand contact to substrate. Residues C257 and C304 are joined by a disulfide bond. N276 is a glycosylation site (N-linked (GlcNAc...) asparagine). The active-site Nucleophile is the E287. Substrate is bound at residue Y353. Residues N391, N434, N517, N602, N677, N715, N720, and N759 are each glycosylated (N-linked (GlcNAc...) asparagine).

It belongs to the glycosyl hydrolase 35 family.

It is found in the secreted. It catalyses the reaction Hydrolysis of terminal non-reducing beta-D-galactose residues in beta-D-galactosides.. Cleaves beta-linked terminal galactosyl residues from gangliosides, glycoproteins, and glycosaminoglycans. The polypeptide is Probable beta-galactosidase C (lacC) (Aspergillus clavatus (strain ATCC 1007 / CBS 513.65 / DSM 816 / NCTC 3887 / NRRL 1 / QM 1276 / 107)).